The sequence spans 197 residues: UPF0215 protein MK0057 (197 aa).

Belongs to the UPF0215 family.

This Methanopyrus kandleri (strain AV19 / DSM 6324 / JCM 9639 / NBRC 100938) protein is UPF0215 protein MK0057.